Here is a 96-residue protein sequence, read N- to C-terminus: Ubiquitin-related modifier 1 (96 aa).

At G96 the chain carries 1-thioglycine. Residue G96 forms a Glycyl lysine isopeptide (Gly-Lys) (interchain with K-? in acceptor proteins) linkage.

It belongs to the URM1 family. In terms of processing, C-terminal thiocarboxylation occurs in 2 steps, it is first acyl-adenylated (-COAMP) via the hesA/moeB/thiF part of UBA4, then thiocarboxylated (-COSH) via the rhodanese domain of UBA4.

Its subcellular location is the cytoplasm. It functions in the pathway tRNA modification; 5-methoxycarbonylmethyl-2-thiouridine-tRNA biosynthesis. Acts as a sulfur carrier required for 2-thiolation of mcm(5)S(2)U at tRNA wobble positions of cytosolic tRNA(Lys), tRNA(Glu) and tRNA(Gln). Serves as sulfur donor in tRNA 2-thiolation reaction by being thiocarboxylated (-COSH) at its C-terminus by the MOCS3 homolog UBA4. The sulfur is then transferred to tRNA to form 2-thiolation of mcm(5)S(2)U. Prior mcm(5) tRNA modification by the elongator complex is required for 2-thiolation. Also acts as a ubiquitin-like protein (UBL) that is covalently conjugated via an isopeptide bond to lysine residues of target proteins such as AHP1. The thiocarboxylated form serves as substrate for conjugation and oxidative stress specifically induces the formation of UBL-protein conjugates. The protein is Ubiquitin-related modifier 1 of Encephalitozoon cuniculi (strain GB-M1) (Microsporidian parasite).